The primary structure comprises 218 residues: Thiamine-phosphate synthase (218 aa).

4-amino-2-methyl-5-(diphosphooxymethyl)pyrimidine-binding positions include 43–47 and Asn-78; that span reads QFRDK. Asp-79 and Asp-98 together coordinate Mg(2+). Ser-117 serves as a coordination point for 4-amino-2-methyl-5-(diphosphooxymethyl)pyrimidine. 2-[(2R,5Z)-2-carboxy-4-methylthiazol-5(2H)-ylidene]ethyl phosphate is bound at residue 143-145; it reads TNS. A 4-amino-2-methyl-5-(diphosphooxymethyl)pyrimidine-binding site is contributed by Lys-146. 2-[(2R,5Z)-2-carboxy-4-methylthiazol-5(2H)-ylidene]ethyl phosphate contacts are provided by residues Gly-174 and 194–195; that span reads IS.

The protein belongs to the thiamine-phosphate synthase family. The cofactor is Mg(2+).

The enzyme catalyses 2-[(2R,5Z)-2-carboxy-4-methylthiazol-5(2H)-ylidene]ethyl phosphate + 4-amino-2-methyl-5-(diphosphooxymethyl)pyrimidine + 2 H(+) = thiamine phosphate + CO2 + diphosphate. The catalysed reaction is 2-(2-carboxy-4-methylthiazol-5-yl)ethyl phosphate + 4-amino-2-methyl-5-(diphosphooxymethyl)pyrimidine + 2 H(+) = thiamine phosphate + CO2 + diphosphate. It carries out the reaction 4-methyl-5-(2-phosphooxyethyl)-thiazole + 4-amino-2-methyl-5-(diphosphooxymethyl)pyrimidine + H(+) = thiamine phosphate + diphosphate. It functions in the pathway cofactor biosynthesis; thiamine diphosphate biosynthesis; thiamine phosphate from 4-amino-2-methyl-5-diphosphomethylpyrimidine and 4-methyl-5-(2-phosphoethyl)-thiazole: step 1/1. In terms of biological role, condenses 4-methyl-5-(beta-hydroxyethyl)thiazole monophosphate (THZ-P) and 2-methyl-4-amino-5-hydroxymethyl pyrimidine pyrophosphate (HMP-PP) to form thiamine monophosphate (TMP). This Lactococcus lactis subsp. cremoris (strain MG1363) protein is Thiamine-phosphate synthase.